The following is a 77-amino-acid chain: Mu-conotoxin BuIIIA (77 aa).

The N-terminal stretch at 1–22 is a signal peptide; the sequence is MMSKLGVLLTICLLLFPLFALP. Positions 23 to 51 are excised as a propeptide; the sequence is QDGDQPADRPAERMQDDISSEQNSLLEKR. Positions 26-46 are disordered; that stretch reads DQPADRPAERMQDDISSEQNS. A compositionally biased stretch (basic and acidic residues) spans 28 to 38; sequence PADRPAERMQD. 3 disulfides stabilise this stretch: C56–C67, C57–C73, and C63–C74. C74 is subject to Cysteine amide.

Belongs to the conotoxin M superfamily. In terms of tissue distribution, expressed by the venom duct.

It localises to the secreted. In terms of biological role, mu-conotoxins block voltage-gated sodium channels (Nav). This synthetic toxin potently blocks rNav1.2/SCN2A, and rNav1.4/SCN4A. It also moderately blocks rNav1.1/SCN1A, rNav1.3/SCN3A, rNav1.5/SCN5A, and mNav1.6/SCN8A. The inhibition is reversible. The sequence is that of Mu-conotoxin BuIIIA from Conus bullatus (Bubble cone).